The primary structure comprises 448 residues: Putative F-box/LRR-repeat protein At5g25860 (448 aa).

The region spanning 11–58 is the F-box domain; sequence RDAVNCLPDEILAKILSYLPTKRAVSTSLISKRWRNLFALMIQLFESQ. LRR repeat units lie at residues 82 to 106, 185 to 214, 215 to 240, 310 to 341, and 342 to 367; these read QESF…SILC, FLHA…FLHD, LRGY…TVHF, TLSL…YFES, and NEKE…VLKG.

The sequence is that of Putative F-box/LRR-repeat protein At5g25860 from Arabidopsis thaliana (Mouse-ear cress).